A 919-amino-acid polypeptide reads, in one-letter code: Probable dipeptidyl-aminopeptidase B (919 aa).

The disordered stretch occupies residues 1–89 (MGANSRVNDD…DGYVPSGGKP (89 aa)). Topologically, residues 1–95 (MGANSRVNDD…GGKPAQRRTR (95 aa)) are cytoplasmic. A compositionally biased stretch (low complexity) spans 27-38 (DSSSTASISLTL). Residues 44-55 (HTATEPSKSTNG) are compositionally biased toward polar residues. Residues 96–116 (IVFWLLVALCVGGWAMAFIIM) form a helical; Signal-anchor for type II membrane protein membrane-spanning segment. The Vacuolar portion of the chain corresponds to 117-919 (ATSPNNRHST…RVIRRLLHFG (803 aa)). Residues 121–150 (NNRHSTSDSSSGGSESEIVKPNTPHDGKKI) form a disordered region. Low complexity predominate over residues 127 to 136 (SDSSSGGSES). 5 N-linked (GlcNAc...) asparagine glycosylation sites follow: Asn-207, Asn-303, Asn-355, Asn-577, and Asn-665. The Charge relay system role is filled by Ser-760. 2 N-linked (GlcNAc...) asparagine glycosylation sites follow: Asn-814 and Asn-819. Active-site charge relay system residues include Asp-837 and His-870.

Belongs to the peptidase S9B family.

It localises to the vacuole membrane. It carries out the reaction Release of an N-terminal dipeptide, Xaa-Yaa-|-Zaa-, from a polypeptide, preferentially when Yaa is Pro, provided Zaa is neither Pro nor hydroxyproline.. Its function is as follows. Type IV dipeptidyl-peptidase which removes N-terminal dipeptides sequentially from polypeptides having unsubstituted N-termini provided that the penultimate residue is proline. In Arthroderma otae (strain ATCC MYA-4605 / CBS 113480) (Microsporum canis), this protein is Probable dipeptidyl-aminopeptidase B (DAPB).